The sequence spans 427 residues: UPF0229 protein KPN78578_11640 (427 aa).

Positions 72–109 are disordered; sequence RNRVHPGNDHFVQNDRIERPQGGGGGGGSGQGQASADG. Residues 77 to 90 show a composition bias toward basic and acidic residues; it reads PGNDHFVQNDRIER. Positions 92 to 102 are enriched in gly residues; sequence QGGGGGGGSGQ.

It belongs to the UPF0229 family.

This chain is UPF0229 protein KPN78578_11640, found in Klebsiella pneumoniae subsp. pneumoniae (strain ATCC 700721 / MGH 78578).